A 369-amino-acid polypeptide reads, in one-letter code: Serpentine receptor class epsilon-45 (369 aa).

A run of 8 helical transmembrane segments spans residues 1–21 (MIFL…IFIL), 39–59 (FVLT…AIHI), 67–87 (TVLL…NILI), 127–147 (FFLG…TLLV), 169–191 (GLFF…LFFF), 195–217 (HFAV…FTYV), 258–278 (VIHA…FMYL), and 291–311 (IFES…LGSV).

Belongs to the nematode receptor-like protein sre family.

The protein localises to the membrane. The chain is Serpentine receptor class epsilon-45 (sre-45) from Caenorhabditis elegans.